The sequence spans 369 residues: tRNA/tmRNA (uracil-C(5))-methyltransferase (369 aa).

Positions 192, 221, 226, 242, and 302 each coordinate S-adenosyl-L-methionine. The active-site Nucleophile is cysteine 327. Glutamate 361 serves as the catalytic Proton acceptor.

It belongs to the class I-like SAM-binding methyltransferase superfamily. RNA M5U methyltransferase family. TrmA subfamily.

The catalysed reaction is uridine(54) in tRNA + S-adenosyl-L-methionine = 5-methyluridine(54) in tRNA + S-adenosyl-L-homocysteine + H(+). It catalyses the reaction uridine(341) in tmRNA + S-adenosyl-L-methionine = 5-methyluridine(341) in tmRNA + S-adenosyl-L-homocysteine + H(+). Functionally, dual-specificity methyltransferase that catalyzes the formation of 5-methyluridine at position 54 (m5U54) in all tRNAs, and that of position 341 (m5U341) in tmRNA (transfer-mRNA). The polypeptide is tRNA/tmRNA (uracil-C(5))-methyltransferase (Haemophilus ducreyi (strain 35000HP / ATCC 700724)).